A 175-amino-acid chain; its full sequence is Translation initiation factor IF-3 (175 aa).

Belongs to the IF-3 family. In terms of assembly, monomer.

It is found in the cytoplasm. Its function is as follows. IF-3 binds to the 30S ribosomal subunit and shifts the equilibrium between 70S ribosomes and their 50S and 30S subunits in favor of the free subunits, thus enhancing the availability of 30S subunits on which protein synthesis initiation begins. The chain is Translation initiation factor IF-3 from Staphylococcus aureus (strain MRSA252).